We begin with the raw amino-acid sequence, 149 residues long: Oocyte-expressed protein homolog (149 aa).

The segment at 1 to 23 (MVDDAGTAESQRGKQTPADSLEQ) is disordered. The segment covering 8 to 18 (AESQRGKQTPA) has biased composition (polar residues). The KH; atypical domain maps to 49–110 (PLVFYLEAWL…SVQNRVKSML (62 aa)).

The protein belongs to the KHDC1 family. As to quaternary structure, component of the subcortical maternal complex (SCMC), at least composed of NLRP5, KHDC3, OOEP, and TLE6. Within the complex, interacts with NLRP5, KHDC3 and TLE6. As part of the SCMC interacts with the SCMC-associated protein NLRP4F. The SCMC may facilitate translocation of its components between the nuclear and cytoplasmic compartments. Forms a scaffold complex with KHDC3/FILIA, and interacts with BLM and TRIM25 at DNA replication forks.

It localises to the cytoplasm. Its subcellular location is the nucleus. In terms of biological role, component of the subcortical maternal complex (SCMC), a multiprotein complex that plays a key role in early embryonic development. The SCMC complex is a structural constituent of cytoplasmic lattices, which consist in fibrous structures found in the cytoplasm of oocytes and preimplantation embryos. They are required to store maternal proteins critical for embryonic development, such as proteins that control epigenetic reprogramming of the preimplantation embryo, and prevent their degradation or activation. As part of the OOEP-KHDC3 scaffold, recruits BLM and TRIM25 to DNA replication forks, thereby promoting the ubiquitination of BLM by TRIM25, enhancing BLM retainment at replication forks and therefore promoting stalled replication fork restart. Positively regulates the homologous recombination-mediated DNA double-strand break (DSB) repair pathway by regulating ATM activation and RAD51 recruitment to DSBs in oocytes. Thereby contributes to oocyte survival and the resumption and completion of meiosis. The sequence is that of Oocyte-expressed protein homolog (OOEP) from Papio anubis (Olive baboon).